Reading from the N-terminus, the 96-residue chain is Small ribosomal subunit protein bS20 (96 aa).

This sequence belongs to the bacterial ribosomal protein bS20 family.

Functionally, binds directly to 16S ribosomal RNA. This is Small ribosomal subunit protein bS20 from Anaplasma marginale (strain St. Maries).